Here is a 258-residue protein sequence, read N- to C-terminus: Snake venom serine proteinase 8 (258 aa).

The signal sequence occupies residues 1–18; that stretch reads MVLIRVLANLLILQLSYA. Positions 19 to 24 are excised as a propeptide; the sequence is QKSSEL. Residues 25 to 249 form the Peptidase S1 domain; it reads VIGGDECNIN…YNDWIQSIIA (225 aa). 6 disulfides stabilise this stretch: Cys31/Cys163, Cys50/Cys66, Cys98/Cys256, Cys142/Cys210, Cys174/Cys189, and Cys200/Cys225. Residue Asn44 is glycosylated (N-linked (GlcNAc...) asparagine). Active-site charge relay system residues include His65 and Asp110. The active-site Charge relay system is the Ser204.

This sequence belongs to the peptidase S1 family. Snake venom subfamily. In terms of assembly, monomer. Expressed by the venom gland.

Its subcellular location is the secreted. In terms of biological role, snake venom serine protease that may act in the hemostasis system of the prey. In Crotalus adamanteus (Eastern diamondback rattlesnake), this protein is Snake venom serine proteinase 8.